Consider the following 346-residue polypeptide: Uroporphyrinogen decarboxylase (346 aa).

Substrate is bound by residues 21–25, Asp-71, Tyr-146, Ser-201, and His-316; that span reads RQAGR.

This sequence belongs to the uroporphyrinogen decarboxylase family. As to quaternary structure, homodimer.

It localises to the cytoplasm. It catalyses the reaction uroporphyrinogen III + 4 H(+) = coproporphyrinogen III + 4 CO2. Its pathway is porphyrin-containing compound metabolism; protoporphyrin-IX biosynthesis; coproporphyrinogen-III from 5-aminolevulinate: step 4/4. In terms of biological role, catalyzes the decarboxylation of four acetate groups of uroporphyrinogen-III to yield coproporphyrinogen-III. This is Uroporphyrinogen decarboxylase from Rickettsia massiliae (strain Mtu5).